Here is a 1150-residue protein sequence, read N- to C-terminus: Alpha-mannosidase 2 (1150 aa).

Topologically, residues 1–5 are cytoplasmic; the sequence is MKLSR. Residues 6-26 traverse the membrane as a helical; Signal-anchor for type II membrane protein segment; sequence QFTVFGSAIFCVVIFSLYLML. Residues 27–1150 lie on the Lumenal side of the membrane; it reads DRGHLDYPRG…STFRIRLRWT (1124 aa). Residue Asn78 is glycosylated (N-linked (GlcNAc...) asparagine). A phosphoserine mark is found at Ser80 and Ser82. A glycan (N-linked (GlcNAc...) asparagine) is linked at Asn93. Residues His174, Asp176, Asp288, and His568 each coordinate Zn(2+). Asp288 serves as the catalytic Nucleophile. Asn1129 is a glycosylation site (N-linked (GlcNAc...) asparagine).

Belongs to the glycosyl hydrolase 38 family. In terms of assembly, homodimer; disulfide-linked. Requires Zn(2+) as cofactor. Glycosylated. In terms of tissue distribution, all tissues, mostly in adrenal and thymus.

It is found in the golgi apparatus membrane. It catalyses the reaction N(4)-{beta-D-GlcNAc-(1-&gt;2)-alpha-D-Man-(1-&gt;3)-[alpha-D-Man-(1-&gt;3)-[alpha-D-Man-(1-&gt;6)]-alpha-D-Man-(1-&gt;6)]-beta-D-Man-(1-&gt;4)-beta-D-GlcNAc-(1-&gt;4)-beta-D-GlcNAc}-L-asparaginyl-[protein] + 2 H2O = 2 alpha-D-mannopyranose + an N(4)-{beta-D-GlcNAc-(1-&gt;2)-alpha-D-Man-(1-&gt;3)-[alpha-D-Man-(1-&gt;6)]-beta-D-Man-(1-&gt;4)-beta-D-GlcNAc-(1-&gt;4)-beta-D-GlcNAc}-L-asparaginyl-[protein]. It functions in the pathway protein modification; protein glycosylation. In terms of biological role, catalyzes the first committed step in the biosynthesis of complex N-glycans. It controls conversion of high mannose to complex N-glycans; the final hydrolytic step in the N-glycan maturation pathway. This chain is Alpha-mannosidase 2 (Man2a1), found in Mus musculus (Mouse).